The primary structure comprises 425 residues: Histone-binding protein RBBP4 (425 aa).

Ala-2 carries the N-acetylalanine modification. Lys-4 is modified (N6-acetyllysine; alternate). Lys-4 participates in a covalent cross-link: Glycyl lysine isopeptide (Lys-Gly) (interchain with G-Cter in SUMO2); alternate. Residue Lys-4 forms a Glycyl lysine isopeptide (Lys-Gly) (interchain with G-Cter in ubiquitin); alternate linkage. WD repeat units lie at residues 32-125, 126-175, 176-223, 225-270, 271-314, 315-371, and 372-404; these read YDLV…NHEG, EVNR…RLRG, HQKE…KTIF, GHTA…HSVD, AHTA…HSFE, SHKD…FIHG, and GHTA…VWQM. Residue Ser-110 is modified to Phosphoserine. N6-acetyllysine; alternate is present on Lys-160. Lys-160 is covalently cross-linked (Glycyl lysine isopeptide (Lys-Gly) (interchain with G-Cter in SUMO2); alternate). Position 355 is a phosphoserine (Ser-355).

The protein belongs to the WD repeat RBAP46/RBAP48/MSI1 family. Binds directly to helix 1 of the histone fold of histone H4, a region that is not accessible when H4 is in chromatin. Subunit of the chromatin assembly factor 1 (CAF-1) complex, which is composed of RBBP4, CHAF1B and CHAF1A. Subunit of the core histone deacetylase (HDAC) complex, which is composed of HDAC1, HDAC2, RBBP4 and RBBP7. The core HDAC complex associates with SIN3A, ARID4B/SAP180, SAP18, SAP30, SAP130, SUDS3/SAP45 and possibly ARID4A/RBP1 and ING1 to form the SIN3 HDAC complex. Component of the nucleosome remodeling and deacetylase (NuRD) repressor complex, composed of core proteins MTA1, MTA2, MTA3, RBBP4, RBBP7, HDAC1, HDAC2, MBD2, MBD3, and peripherally associated proteins CDK2AP1, CDK2AP2, GATAD2A, GATAD2B, CHD3, CHD4 and CHD5. The exact stoichiometry of the NuRD complex is unknown, and some subunits such as MBD2 and MBD3, GATAD2A and GATAD2B, and CHD3, CHD4 and CHD5 define mutually exclusive NuRD complexes. Interacts with ZNF512B; the interaction is direct and may play a role in repressing gene expression. The NuRD complex may also interact with MBD3L1 and MBD3L2. Component of the PRC2 complex, which consists of the core subunits EED, EZH1 or EZH2, SUZ12, and RBBP4, and various combinations of accessory subunits including AEBP2, JARID2, PHF19, MTF2 and EPOP. Forms a monomeric PRC2.2 (class 2) complex consisting of at least SUZ12, RBBP4, AEBP2 and JARID2. Forms a dimeric PRC2.1 (class 1, PRC-PCL) complex consisting of at least SUZ12, RBBP4, and PHF19; PHF19 stabilizes the dimeric structure which enhances PRC2 interaction with chromatin. Component of the NURF-1 ISWI chromatin remodeling complex (also called the nucleosome-remodeling factor (NURF) complex) at least composed of SMARCA1 (isoform 2), BPTF, RBBP4 and RBBP7. Within the complex interacts with isoform 2 of SMARCA1. Component of the BPFT-SMARCA1 complex at least composed of SMARCA1 (isoform 1), BPFT, RBBP4 and RBBP7; the complex is catalytically inactive and does not remodel chromatin. Within the complex interacts with isoform 1 of SMARCA1. Interacts with the ISWI chromatin remodeling complex component SMARCA5; the interaction is direct. Interacts with the viral protein-binding domain of the retinoblastoma protein (RB1). Component of the DREAM complex (also named LINC complex) at least composed of E2F4, E2F5, LIN9, LIN37, LIN52, LIN54, MYBL1, MYBL2, RBL1, RBL2, RBBP4, TFDP1 and TFDP2. The complex exists in quiescent cells where it represses cell cycle-dependent genes. It dissociates in S phase when LIN9, LIN37, LIN52 and LIN54 form a subcomplex that binds to MYBL2. Found in a complex composed of at least SINHCAF, SIN3A, HDAC1, SAP30, RBBP4, OGT and TET1. Interacts with ZNF827; the interaction is direct and recruits RBBP4 to telomeres. Interacts with MTA1; the interaction is direct and mutually exclusive with binding histone H4. Interacts with ARMC12 (via ARM domains). Interacts with BRCA1. Interacts with CDK2AP1. Interacts with CREBBP, and this interaction may be enhanced by the binding of phosphorylated CREB1 to CREBBP. Interacts with ERCC6. Interacts with HDAC7. Interacts with PHF6. Interacts with PWWP2B. Interacts with SPEN/MINT. Interacts with SUV39H1.

Its subcellular location is the nucleus. It localises to the chromosome. The protein resides in the telomere. Its function is as follows. Core histone-binding subunit that may target chromatin assembly factors, chromatin remodeling factors and histone deacetylases to their histone substrates in a manner that is regulated by nucleosomal DNA. Component of the chromatin assembly factor 1 (CAF-1) complex, which is required for chromatin assembly following DNA replication and DNA repair. Component of the core histone deacetylase (HDAC) complex, which promotes histone deacetylation and consequent transcriptional repression. Component of the nucleosome remodeling and histone deacetylase complex (the NuRD complex), which promotes transcriptional repression by histone deacetylation and nucleosome remodeling. Component of the PRC2 complex, which promotes repression of homeotic genes during development. Component of the NURF (nucleosome remodeling factor) complex. The protein is Histone-binding protein RBBP4 (RBBP4) of Bos taurus (Bovine).